Consider the following 348-residue polypeptide: Nicotinate-nucleotide--dimethylbenzimidazole phosphoribosyltransferase (348 aa).

Glutamate 316 functions as the Proton acceptor in the catalytic mechanism.

Belongs to the CobT family.

It catalyses the reaction 5,6-dimethylbenzimidazole + nicotinate beta-D-ribonucleotide = alpha-ribazole 5'-phosphate + nicotinate + H(+). Its pathway is nucleoside biosynthesis; alpha-ribazole biosynthesis; alpha-ribazole from 5,6-dimethylbenzimidazole: step 1/2. Catalyzes the synthesis of alpha-ribazole-5'-phosphate from nicotinate mononucleotide (NAMN) and 5,6-dimethylbenzimidazole (DMB). The chain is Nicotinate-nucleotide--dimethylbenzimidazole phosphoribosyltransferase from Xanthomonas campestris pv. campestris (strain B100).